Consider the following 93-residue polypeptide: Small ribosomal subunit protein uS19 (93 aa).

Belongs to the universal ribosomal protein uS19 family.

Protein S19 forms a complex with S13 that binds strongly to the 16S ribosomal RNA. In Thermus thermophilus (strain ATCC BAA-163 / DSM 7039 / HB27), this protein is Small ribosomal subunit protein uS19 (rpsS).